A 428-amino-acid polypeptide reads, in one-letter code: Aminotransferase verI (428 aa).

Lys254 carries the post-translational modification N6-(pyridoxal phosphate)lysine.

The protein belongs to the class-I pyridoxal-phosphate-dependent aminotransferase family. Pyridoxal 5'-phosphate is required as a cofactor.

Its pathway is mycotoxin biosynthesis. Its function is as follows. Aminotransferase; part of the gene cluster that mediates the biosynthesis of 11'-deoxyverticillin A, one of the dimeric epipolythiodioxopiperazines (ETPs) from the verticillin family that act as mycotoxins. 11'-deoxyverticillin A is required for normal conidiation. The nonribosomal peptide synthetase verP is speculated to be responsible for condensation of amino acids to form the carbon skeleton of verticillin, whereas the cluster-specific tailoring enzymes are involved in further modifications leading to the production of 11'-deoxyverticillin A. The sequence is that of Aminotransferase verI from Clonostachys rogersoniana.